A 166-amino-acid polypeptide reads, in one-letter code: Small ribosomal subunit protein uS5 (166 aa).

The region spanning 11 to 74 (LREKLVAINR…EKARANMKRV (64 aa)) is the S5 DRBM domain.

It belongs to the universal ribosomal protein uS5 family. In terms of assembly, part of the 30S ribosomal subunit. Contacts proteins S4 and S8.

Its function is as follows. With S4 and S12 plays an important role in translational accuracy. Located at the back of the 30S subunit body where it stabilizes the conformation of the head with respect to the body. The protein is Small ribosomal subunit protein uS5 of Alkalilimnicola ehrlichii (strain ATCC BAA-1101 / DSM 17681 / MLHE-1).